Reading from the N-terminus, the 163-residue chain is Probable metallophosphoesterase MG207 (163 aa).

Mn(2+) is bound by residues D9, H11, D34, N53, H75, H107, and H109.

This sequence belongs to the metallophosphoesterase superfamily. YfcE family. Requires Mn(2+) as cofactor.

This is Probable metallophosphoesterase MG207 from Mycoplasma genitalium (strain ATCC 33530 / DSM 19775 / NCTC 10195 / G37) (Mycoplasmoides genitalium).